Here is a 161-residue protein sequence, read N- to C-terminus: Putative pre-16S rRNA nuclease (161 aa).

This sequence belongs to the YqgF nuclease family.

It is found in the cytoplasm. In terms of biological role, could be a nuclease involved in processing of the 5'-end of pre-16S rRNA. This Bradyrhizobium sp. (strain ORS 278) protein is Putative pre-16S rRNA nuclease.